A 187-amino-acid chain; its full sequence is UPF0398 protein LJ_1195 (187 aa).

This sequence belongs to the UPF0398 family.

This is UPF0398 protein LJ_1195 from Lactobacillus johnsonii (strain CNCM I-12250 / La1 / NCC 533).